Here is a 346-residue protein sequence, read N- to C-terminus: Deoxyhypusine hydroxylase (346 aa).

HEAT-like PBS-type repeat units follow at residues 71–100 (VLLR…LNDT), 104–133 (LMVR…LNDE), 213–242 (LKLR…LIKD), 246–275 (AIFR…LQNV), and 279–320 (EMVR…SKDA). Fe cation is bound by residues H75, H108, and E109. Residues H250, H283, and E284 each coordinate Fe cation.

Belongs to the deoxyhypusine hydroxylase family. Fe(2+) serves as cofactor.

It catalyses the reaction [eIF5A protein]-deoxyhypusine + AH2 + O2 = [eIF5A protein]-hypusine + A + H2O. The protein operates within protein modification; eIF5A hypusination. Catalyzes the hydroxylation of the N(6)-(4-aminobutyl)-L-lysine intermediate produced by deoxyhypusine synthase/DHPS on a critical lysine of the eukaryotic translation initiation factor 5A/eIF-5A. This is the second step of the post-translational modification of that lysine into an unusual amino acid residue named hypusine. Hypusination is unique to mature eIF-5A factor and is essential for its function. The polypeptide is Deoxyhypusine hydroxylase (Plasmodium vivax (strain Salvador I)).